Reading from the N-terminus, the 121-residue chain is Protein TusC (121 aa).

This sequence belongs to the DsrF/TusC family. Heterohexamer, formed by a dimer of trimers. The hexameric TusBCD complex contains 2 copies each of TusB, TusC and TusD. The TusBCD complex interacts with TusE.

The protein resides in the cytoplasm. Functionally, part of a sulfur-relay system required for 2-thiolation of 5-methylaminomethyl-2-thiouridine (mnm(5)s(2)U) at tRNA wobble positions. This Yersinia pestis bv. Antiqua (strain Antiqua) protein is Protein TusC.